Consider the following 111-residue polypeptide: uncharacterized protein (111 aa).

Positions 3–29 (RKITSYKTSLQGLREENEDVELMNLNL) form a coiled coil. The region spanning 6–111 (TSYKTSLQGL…TWWMYCSSYY (106 aa)) is the PPM-type phosphatase domain.

This is an uncharacterized protein from Acanthamoeba polyphaga mimivirus (APMV).